Consider the following 335-residue polypeptide: Probable deoxyhypusine synthase (335 aa).

Lys308 acts as the Nucleophile in catalysis.

This sequence belongs to the deoxyhypusine synthase family. NAD(+) serves as cofactor.

The catalysed reaction is [eIF5A protein]-L-lysine + spermidine = [eIF5A protein]-deoxyhypusine + propane-1,3-diamine. It participates in protein modification; eIF5A hypusination. In terms of biological role, catalyzes the NAD-dependent oxidative cleavage of spermidine and the subsequent transfer of the butylamine moiety of spermidine to the epsilon-amino group of a specific lysine residue of the eIF-5A precursor protein to form the intermediate deoxyhypusine residue. The polypeptide is Probable deoxyhypusine synthase (Thermococcus onnurineus (strain NA1)).